The following is a 215-amino-acid chain: Cytochrome b6 (215 aa).

Residues isoleucine 32 to phenylalanine 52 traverse the membrane as a helical segment. Cysteine 35 is a binding site for heme c. Heme b contacts are provided by histidine 86 and histidine 100. 3 helical membrane-spanning segments follow: residues alanine 90 to phenylalanine 110, leucine 116 to tyrosine 136, and leucine 186 to isoleucine 206. Residues histidine 187 and histidine 202 each contribute to the heme b site.

The protein belongs to the cytochrome b family. PetB subfamily. In terms of assembly, the 4 large subunits of the cytochrome b6-f complex are cytochrome b6, subunit IV (17 kDa polypeptide, PetD), cytochrome f and the Rieske protein, while the 4 small subunits are PetG, PetL, PetM and PetN. The complex functions as a dimer. Heme b serves as cofactor. Requires heme c as cofactor.

The protein resides in the plastid. It is found in the chloroplast thylakoid membrane. In terms of biological role, component of the cytochrome b6-f complex, which mediates electron transfer between photosystem II (PSII) and photosystem I (PSI), cyclic electron flow around PSI, and state transitions. This Nicotiana tomentosiformis (Tobacco) protein is Cytochrome b6.